A 790-amino-acid chain; its full sequence is Threonine--tRNA ligase 2, cytoplasmic (790 aa).

Ala-2 is modified (N-acetylalanine). Positions 13–68 (SRLQRQEEDIRWLCAEVQRLRDEQLRGPERGQAEGPRLTREVAQLQAENRDLHQRL) form a coiled coil. Positions 80–117 (RTEAGRAAAHEPPTQNQEKDTKKKRLKQSEPGREVKQP) are disordered. The segment covering 96–117 (QEKDTKKKRLKQSEPGREVKQP) has biased composition (basic and acidic residues). The TGS domain maps to 148–210 (NVISVRVAGG…EGDSTVELLM (63 aa)). Ser-441 carries the phosphoserine modification. Positions 774–780 (KLKNLKK) match the Nuclear localization signal motif.

This sequence belongs to the class-II aminoacyl-tRNA synthetase family. May be a component of the multisynthetase complex (MSC), a large multi-subunit complex which contains at least eight different aminoacyl-tRNA synthetases plus three auxillary subunits AIMP1, AIMP2 and EEF1E1. Interacts with the MSC components EPRS1, AIMP1, AIMP2 and KARS1. As to expression, ubiquitous (at protein level). Strongly expressed in muscle (at protein level). Moderately expressed in heart and liver (at protein level). Weakly expressed in stomach, kidney, testis, spleen, brain, fat and lung (at protein level).

The protein resides in the cytoplasm. Its subcellular location is the nucleus. The catalysed reaction is tRNA(Thr) + L-threonine + ATP = L-threonyl-tRNA(Thr) + AMP + diphosphate + H(+). Functionally, catalyzes the attachment of threonine to tRNA(Thr) in a two-step reaction: threonine is first activated by ATP to form Thr-AMP and then transferred to the acceptor end of tRNA(Thr). Also edits incorrectly charged tRNA(Thr) via its editing domain, at the post-transfer stage. This chain is Threonine--tRNA ligase 2, cytoplasmic (Tars3), found in Mus musculus (Mouse).